Here is a 66-residue protein sequence, read N- to C-terminus: Large ribosomal subunit protein bL28 (66 aa).

This sequence belongs to the bacterial ribosomal protein bL28 family.

This Oenococcus oeni (strain ATCC BAA-331 / PSU-1) protein is Large ribosomal subunit protein bL28.